The following is a 129-amino-acid chain: Bacteriohemerythrin (129 aa).

Residues H19, H59, E63, H78, H82, H119, and D124 each coordinate Fe cation.

This sequence belongs to the hemerythrin family. Monomer.

Functionally, oxygen-binding protein. May be involved in a storage mechanism or for delivery to oxygen-requiring enzymes. The oxygen-binding site contains two iron atoms. This chain is Bacteriohemerythrin, found in Clostridium acetobutylicum (strain ATCC 824 / DSM 792 / JCM 1419 / IAM 19013 / LMG 5710 / NBRC 13948 / NRRL B-527 / VKM B-1787 / 2291 / W).